The following is a 455-amino-acid chain: Glycosyl hydrolase family 109 protein (455 aa).

The segment at residues 1 to 33 (MAGIDRRGFLKASMASVAAAALAGCASQQGTSA) is a signal peptide (tat-type signal). Residues 62–63 (ER), aspartate 84, glutamine 112, 133–136 (WALH), 153–154 (EV), and asparagine 182 each bind NAD(+). Substrate contacts are provided by residues tyrosine 211, arginine 230, 242–245 (YPTH), and tyrosine 324. Tyrosine 242 is a binding site for NAD(+).

The protein belongs to the Gfo/Idh/MocA family. Glycosyl hydrolase 109 subfamily. Requires NAD(+) as cofactor. Predicted to be exported by the Tat system. The position of the signal peptide cleavage has not been experimentally proven.

Glycosidase. This Shewanella amazonensis (strain ATCC BAA-1098 / SB2B) protein is Glycosyl hydrolase family 109 protein.